Consider the following 613-residue polypeptide: 8-methylmenaquinol:fumarate reductase flavoprotein subunit (613 aa).

A signal peptide (tat-type signal) is located at residues 1-33 (MSEQFTRREFLQSACITMGALAVSTSGVDRAFA). Residues 53 to 58 (GSGAAG), 78 to 93 (SKVMPTRSATTMAEGG), and D255 each bind FAD. Substrate-binding residues include H276 and T288. Catalysis depends on R319, which acts as the Proton acceptor. H387 contacts substrate. FAD is bound at residue E413. R424 is a substrate binding site. Residue 429-430 (SL) participates in FAD binding.

This sequence belongs to the FAD-dependent oxidoreductase 2 family. FRD/SDH subfamily. The MFR complex is composed of three subunits: a flavoprotein (SdhA), an iron-sulfur protein (SdhB), and one hydrophobic anchor protein (SdhE). It depends on FAD as a cofactor. In terms of processing, predicted to be exported by the Tat system. The position of the signal peptide cleavage has not been experimentally proven.

The protein resides in the periplasm. It localises to the cell membrane. The enzyme catalyses 8-methylmenaquinone-6 + succinate = 8-methylmenaquinol-6 + fumarate. Functionally, flavoprotein subunit of 8-methylmenaquinol:fumarate reductase (MFR), that catalyzes the reduction of fumarate using 8-methylmenaquinol-6 as electron donor. The complex shows no succinate oxidation activity. Is involved in anaerobic metabolism. SdhA contains the dicarboxylate reduction site. The chain is 8-methylmenaquinol:fumarate reductase flavoprotein subunit from Wolinella succinogenes (strain ATCC 29543 / DSM 1740 / CCUG 13145 / JCM 31913 / LMG 7466 / NCTC 11488 / FDC 602W) (Vibrio succinogenes).